Here is a 245-residue protein sequence, read N- to C-terminus: Transmembrane protein 116 (245 aa).

Helical transmembrane passes span 24–44 (MAFV…FCLG), 88–108 (GIAI…VLLI), 141–161 (FYPV…IIKL), and 173–195 (LYVL…YGWT).

It localises to the membrane. The sequence is that of Transmembrane protein 116 (TMEM116) from Homo sapiens (Human).